The chain runs to 156 residues: ATP synthase subunit b (156 aa).

The helical transmembrane segment at 11–31 threads the bilayer; the sequence is AIAFVLFVLFCMKYVWPPLMA.

This sequence belongs to the ATPase B chain family. In terms of assembly, F-type ATPases have 2 components, F(1) - the catalytic core - and F(0) - the membrane proton channel. F(1) has five subunits: alpha(3), beta(3), gamma(1), delta(1), epsilon(1). F(0) has three main subunits: a(1), b(2) and c(10-14). The alpha and beta chains form an alternating ring which encloses part of the gamma chain. F(1) is attached to F(0) by a central stalk formed by the gamma and epsilon chains, while a peripheral stalk is formed by the delta and b chains.

It is found in the cell inner membrane. Its function is as follows. F(1)F(0) ATP synthase produces ATP from ADP in the presence of a proton or sodium gradient. F-type ATPases consist of two structural domains, F(1) containing the extramembraneous catalytic core and F(0) containing the membrane proton channel, linked together by a central stalk and a peripheral stalk. During catalysis, ATP synthesis in the catalytic domain of F(1) is coupled via a rotary mechanism of the central stalk subunits to proton translocation. In terms of biological role, component of the F(0) channel, it forms part of the peripheral stalk, linking F(1) to F(0). In Citrobacter koseri (strain ATCC BAA-895 / CDC 4225-83 / SGSC4696), this protein is ATP synthase subunit b.